Consider the following 677-residue polypeptide: O-fucosyltransferase 27 (677 aa).

The helical; Signal-anchor for type II membrane protein transmembrane segment at 15–35 threads the bilayer; that stretch reads WIGLLGLVLSAFSLLVHFLLA. Residue asparagine 130 is glycosylated (N-linked (GlcNAc...) asparagine). Residues 410–437 form a disordered region; the sequence is PPSIEVETKHDSLKSTRQRPQPLPPPPA. Residues asparagine 542 and asparagine 592 are each glycosylated (N-linked (GlcNAc...) asparagine). Positions 619 to 677 are disordered; that stretch reads NAEKEEDLDEEDLSSSGLFFGHKESGGNNNGNNETVNSEANNKEEGQLEDQEELEGSER. The segment covering 622 to 631 has biased composition (acidic residues); the sequence is KEEDLDEEDL. Residues 644–658 are compositionally biased toward low complexity; that stretch reads GGNNNGNNETVNSEA. Residue asparagine 651 is glycosylated (N-linked (GlcNAc...) asparagine). A compositionally biased stretch (acidic residues) spans 665-677; it reads QLEDQEELEGSER.

This sequence belongs to the glycosyltransferase GT106 family.

The protein resides in the membrane. The protein operates within glycan metabolism. This is O-fucosyltransferase 27 from Arabidopsis thaliana (Mouse-ear cress).